Here is an 89-residue protein sequence, read N- to C-terminus: Protein S100-A8 (89 aa).

EF-hand domains are found at residues 12–47 and 46–81; these read LIDV…KFMK and MKKK…VGLE. Zn(2+) contacts are provided by histidine 17 and histidine 27. Residue aspartate 33 participates in Ca(2+) binding. S-nitrosocysteine is present on cysteine 42. Ca(2+) contacts are provided by aspartate 59, asparagine 61, aspartate 63, and glutamate 70. Zn(2+) is bound at residue histidine 83.

Belongs to the S-100 family. As to quaternary structure, homodimer. Preferentially exists as a heterodimer or heterotetramer with S100A9 known as calprotectin (S100A8/A9). S100A8 interacts with AGER, ATP2A2 and with the heterodimeric complex formed by TLR4 and LY96. Calprotectin (S100A8/9) interacts with CEACAM3 and tubulin filaments in a calcium-dependent manner. Heterotetrameric calprotectin (S100A8/A9) interacts with ANXA6 and associates with tubulin filaments in activated monocytes. S100A8 and calprotectin (S100A8/9) interact with NCF2/P67PHOX, RAC1 and RAC2. Calprotectin (S100A8/9) interacts with CYBA and CYBB. Calprotectin (S100A8/9) interacts with NOS2 to form the iNOS-S100A8/A9 transnitrosylase complex. Calprotectin (S100A8/9) interacts with CD69. In terms of tissue distribution, found essentially in phagocytic cells.

The protein resides in the secreted. Its subcellular location is the cytoplasm. The protein localises to the cytoskeleton. It localises to the cell membrane. In terms of biological role, S100A8 is a calcium- and zinc-binding protein which plays a prominent role in the regulation of inflammatory processes and immune response. It can induce neutrophil chemotaxis and adhesion. Predominantly found as calprotectin (S100A8/A9) which has a wide plethora of intra- and extracellular functions. The intracellular functions include: facilitating leukocyte arachidonic acid trafficking and metabolism, modulation of the tubulin-dependent cytoskeleton during migration of phagocytes and activation of the neutrophilic NADPH-oxidase. Also participates in regulatory T-cell differentiation together with CD69. Activates NADPH-oxidase by facilitating the enzyme complex assembly at the cell membrane, transferring arachidonic acid, an essential cofactor, to the enzyme complex and S100A8 contributes to the enzyme assembly by directly binding to NCF2/P67PHOX. The extracellular functions involve pro-inflammatory, antimicrobial, oxidant-scavenging and apoptosis-inducing activities. Its pro-inflammatory activity includes recruitment of leukocytes, promotion of cytokine and chemokine production, and regulation of leukocyte adhesion and migration. Acts as an alarmin or a danger associated molecular pattern (DAMP) molecule and stimulates innate immune cells via binding to pattern recognition receptors such as Toll-like receptor 4 (TLR4) and receptor for advanced glycation endproducts (AGER). Binding to TLR4 and AGER activates the MAP-kinase and NF-kappa-B signaling pathways resulting in the amplification of the pro-inflammatory cascade. Has antimicrobial activity towards bacteria and fungi and exerts its antimicrobial activity probably via chelation of Zn(2+) which is essential for microbial growth. Can induce cell death via autophagy and apoptosis and this occurs through the cross-talk of mitochondria and lysosomes via reactive oxygen species (ROS) and the process involves BNIP3. Can regulate neutrophil number and apoptosis by an anti-apoptotic effect; regulates cell survival via ITGAM/ITGB and TLR4 and a signaling mechanism involving MEK-ERK. Its role as an oxidant scavenger has a protective role in preventing exaggerated tissue damage by scavenging oxidants. The iNOS-S100A8/A9 transnitrosylase complex is proposed to direct selective inflammatory stimulus-dependent S-nitrosylation of multiple targets such as GAPDH, ANXA5, EZR, MSN and VIM by recognizing a [IL]-x-C-x-x-[DE] motif; S100A8 seems to contribute to S-nitrosylation site selectivity. This is Protein S100-A8 (S100A8) from Bos taurus (Bovine).